The following is a 374-amino-acid chain: Formylglycine-generating enzyme (374 aa).

Residues 1–33 (MAAPALGPARGCGAELTLVLLLSLFLLLGWAAG) form the signal peptide. A disulfide bond links cysteine 50 and cysteine 52. A disordered region spans residues 57–102 (RPGAQGSSAAAHRYSREANAPGSVPGGRPSPPTKMVPIPAGVFTMG). Residue glutamate 130 coordinates Ca(2+). Residue asparagine 141 is glycosylated (N-linked (GlcNAc...) asparagine). 2 disulfide bridges follow: cysteine 218–cysteine 365 and cysteine 235–cysteine 346. Residues asparagine 259, isoleucine 260, aspartate 273, phenylalanine 275, asparagine 293, glycine 296, alanine 298, and glutamate 300 each coordinate Ca(2+). Cu(2+) is bound by residues cysteine 336 and cysteine 341. The tract at residues 341-360 (CYRYRCAARSQNTPDSSASN) is interaction with sulfatases.

The protein belongs to the sulfatase-modifying factor family. Monomer, homodimer and heterodimer with SUMF2. Requires Cu(2+) as cofactor. N-glycosylated. Contains high-mannose-type oligosaccharides.

The protein localises to the endoplasmic reticulum lumen. The catalysed reaction is L-cysteinyl-[sulfatase] + 2 a thiol + O2 = an organic disulfide + 3-oxo-L-alanyl-[sulfatase] + hydrogen sulfide + H2O + H(+). It participates in protein modification; sulfatase oxidation. Its function is as follows. Oxidase that catalyzes the conversion of cysteine to 3-oxoalanine on target proteins, using molecular oxygen and an unidentified reducing agent. 3-oxoalanine modification, which is also named formylglycine (fGly), occurs in the maturation of arylsulfatases and some alkaline phosphatases that use the hydrated form of 3-oxoalanine as a catalytic nucleophile. Known substrates include GALNS, ARSA, STS and ARSE. This chain is Formylglycine-generating enzyme, found in Bos taurus (Bovine).